Reading from the N-terminus, the 515-residue chain is Ecdysteroid UDP-glucosyltransferase (515 aa).

A signal peptide spans 1–31 (MKMIILVVSLHVLRNSAAVRVLCMFPTPSYS).

It belongs to the UDP-glycosyltransferase family.

In terms of biological role, catalyzes the transfer of glucose from UDP-glucose to ecdysteroids which are insect molting hormones. Expression of egt interferes with normal insect development and block molting. This is Ecdysteroid UDP-glucosyltransferase (EGT) from Spodoptera littoralis nuclear polyhedrosis virus (SlNPV).